Here is a 530-residue protein sequence, read N- to C-terminus: Type 2 DNA topoisomerase 6 subunit B (530 aa).

ATP is bound by residues Asn42, Asp76, 96–98, 107–113, and Lys427; these read SSK and MYGLGVK.

It belongs to the TOP6B family. In terms of assembly, homodimer. Heterotetramer of two Top6A and two Top6B chains.

The enzyme catalyses ATP-dependent breakage, passage and rejoining of double-stranded DNA.. Not inhibited by the DNA gyrase inhibitor novobiocin, instead inhibited by eukaryotic topoisomerase inhibitors such as m- and o-amsacrine, ellipticine, and the quinolone CP-115,953. Radicicol inhibits the ATPase activity. In terms of biological role, relaxes both positive and negative supercoils and exhibits a strong decatenase and unknotting activity; it cannot introduce DNA supercoils. ATP is absolutely required for DNA cleavage; the nonhydrolyzable analog AMP-PNP generates nicked or linear products from a supercoiled dsDNA substrate. Generates staggered two-nucleotide long 5' overhangs. The enzyme is covalently attached transiently to the 5'-ends of the cleaved strands. In Saccharolobus shibatae (strain ATCC 51178 / DSM 5389 / JCM 8931 / NBRC 15437 / B12) (Sulfolobus shibatae), this protein is Type 2 DNA topoisomerase 6 subunit B.